Reading from the N-terminus, the 1099-residue chain is Adenylate cyclase type 7 (1099 aa).

At 1-33 (MPAKGRYFLNEGDEGPDQAALYEKYRLTSLHGP) the chain is on the cytoplasmic side. 6 helical membrane-spanning segments follow: residues 34–54 (LLLLLLLVAAATCIALISIAF), 63–83 (QVVLGTAFLMLTLFVALYVLV), 95–117 (ALALLTWACLMVLGSVLMWDSLE), 122–142 (AWEQVPFFLFVVFVVYALLPL), 147–167 (AIVAGVTSTVSHLLVFGAVTR), and 178–198 (LGLQLLANAVILLGGNFTGAF). The Cytoplasmic segment spans residues 199 to 595 (HKHQLQDASR…YRLVPIPRAR (397 aa)). Positions 286, 287, and 330 each coordinate Mg(2+). ATP contacts are provided by residues 286-291 (DIVGFT), 328-330 (LGD), and Arg-374. The interval 456–476 (DPRSQQPPPPSHHLSKPKGDA) is disordered. Residues 479-484 (KMRASV) are mediates regulation of adenylate cyclase activity by C5 alpha-induced G- beta and gamma pathway. The interval 493–501 (WGAARPFAH) is mediates regulation of adenylate cyclase activity by sphingosine 1-phosphate-induced G alpha 13 pathway. Residues 504 to 543 (HRESVSSSETPISNGRRQKAIPLRRHRAPDRSASPKGRLE) form a disordered region. Over residues 508–518 (VSSSETPISNG) the composition is skewed to polar residues. A modulates adenylate cyclase activity by modulating the binding of G(s)alpha to the high-affinity G(s)alpha binding site in 7C1a/7C2 region spans residues 508–585 (VSSSETPISN…IFLEKGFERE (78 aa)). The segment covering 519 to 531 (RRQKAIPLRRHRA) has biased composition (basic residues). A run of 3 helical transmembrane segments spans residues 596 to 616 (YDFACASLVFVCILLVHLLVM), 621 to 641 (TLGVSFGLVACLLGLVLSFCF), and 670 to 689 (LVLVVLTVGSLLTVAIINMP). N-linked (GlcNAc...) asparagine glycosylation occurs at Asn-702. A run of 3 helical transmembrane segments spans residues 719 to 738 (LLPYYTCSCILGFIACSVFL), 747 to 766 (MLLTVALVAYLLLFNLSPCW), and 813 to 833 (DLKIMVNFYLILFYATLILLS). Residues 834–1099 (RQIDYYCRLD…TAKFQGLGLN (266 aa)) lie on the Cytoplasmic side of the membrane. ATP contacts are provided by residues Lys-950, 1029–1031 (DIW), 1036–1040 (NVASR), and Lys-1076.

This sequence belongs to the adenylyl cyclase class-4/guanylyl cyclase family. It depends on Mg(2+) as a cofactor. Requires Mn(2+) as cofactor. Post-translationally, phosphorylated by PRKCD. As to expression, most abundant in heart, spleen and lung.

It localises to the membrane. It carries out the reaction ATP = 3',5'-cyclic AMP + diphosphate. With respect to regulation, activated by the G protein alpha subunit. Activated by the G protein beta and gamma subunit complex. Activated by GNA13 and GNA12. Ethanol and phorbol 12,13-dibutanoate significantly potentiate adenylate cyclase activity generated in response to the activation of the prostanoid receptor by the agonist prostaglandin E1(1-) in a PKC-dependent manner. Inhibited by lithium. Its function is as follows. Catalyzes the formation of cAMP in response to activation of G protein-coupled receptors. Functions in signaling cascades activated namely by thrombin and sphingosine 1-phosphate and mediates regulation of cAMP synthesis through synergistic action of the stimulatory G alpha protein with GNA13. Also, during inflammation, mediates zymosan-induced increase intracellular cAMP, leading to protein kinase A pathway activation in order to modulate innate immune responses through heterotrimeric G proteins G(12/13). Functions in signaling cascades activated namely by dopamine and C5 alpha chain and mediates regulation of cAMP synthesis through synergistic action of the stimulatory G protein with G beta:gamma complex. Functions, through cAMP response regulation, to keep inflammation under control during bacterial infection by sensing the presence of serum factors, such as the bioactive lysophospholipid (LPA) that regulate LPS-induced TNF-alpha production. However, it is also required for the optimal functions of B and T cells during adaptive immune responses by regulating cAMP synthesis in both B and T cells. This Mus musculus (Mouse) protein is Adenylate cyclase type 7.